The chain runs to 578 residues: Probable lysosomal cobalamin transporter (578 aa).

2 helical membrane passes run 8 to 28 (LIWVVYAIAIAVLIAVASVFI) and 46 to 66 (IFAITTLLATVLLLPVDVALV). N-linked (GlcNAc...) asparagine glycosylation occurs at Asn-70. Transmembrane regions (helical) follow at residues 95-115 (VVYYLLYSLDALLCLLVIPFT) and 145-165 (TITFIAIVIVLFLVGFFVPVA). N-linked (GlcNAc...) asparagine glycosylation is present at Asn-168. The next 6 membrane-spanning stretches (helical) occupy residues 188-208 (ALTFALGLLITIGLCLYVLYT), 312-332 (LLGGIILLIIALVIWVSMLLT), 347-367 (GYILGHITVFNPINWVFVQAA), 375-395 (VIFTLLVLLFFCSSVVGIAIV), 419-439 (LTTAMLMLTILALNYSVSMVV), and 506-526 (FFGVIFFWGQFVFLGVYLIVV). The disordered stretch occupies residues 539–578 (RQMDEDAEEAEEEGLLASTGRRLDTAWQDITGRSNRQRDS). The span at 540–552 (QMDEDAEEAEEEG) shows a compositional bias: acidic residues.

It belongs to the LIMR family. LMBRD1 subfamily.

It localises to the lysosome membrane. Its function is as follows. Probable lysosomal cobalamin transporter. Required to export cobalamin from lysosomes allowing its conversion to cofactors. The chain is Probable lysosomal cobalamin transporter from Aspergillus terreus (strain NIH 2624 / FGSC A1156).